Here is a 230-residue protein sequence, read N- to C-terminus: Phosphoenolpyruvate guanylyltransferase (230 aa).

Residues Thr139, Gly155, and Ser158 each coordinate phosphoenolpyruvate.

Belongs to the CofC family.

It carries out the reaction phosphoenolpyruvate + GTP + H(+) = enolpyruvoyl-2-diphospho-5'-guanosine + diphosphate. Its pathway is cofactor biosynthesis; coenzyme F420 biosynthesis. Its function is as follows. Guanylyltransferase that catalyzes the activation of phosphoenolpyruvate (PEP) as enolpyruvoyl-2-diphospho-5'-guanosine, via the condensation of PEP with GTP. It is involved in the biosynthesis of coenzyme F420, a hydride carrier cofactor. This chain is Phosphoenolpyruvate guanylyltransferase, found in Thermobaculum terrenum (strain ATCC BAA-798 / CCMEE 7001 / YNP1).